The sequence spans 283 residues: 4-diphosphocytidyl-2-C-methyl-D-erythritol kinase (283 aa).

The active site involves lysine 10. ATP is bound at residue 99–109; that stretch reads PMGGGLGGGSS. The active site involves aspartate 141.

Belongs to the GHMP kinase family. IspE subfamily. As to quaternary structure, homodimer.

It catalyses the reaction 4-CDP-2-C-methyl-D-erythritol + ATP = 4-CDP-2-C-methyl-D-erythritol 2-phosphate + ADP + H(+). It participates in isoprenoid biosynthesis; isopentenyl diphosphate biosynthesis via DXP pathway; isopentenyl diphosphate from 1-deoxy-D-xylulose 5-phosphate: step 3/6. Functionally, catalyzes the phosphorylation of the position 2 hydroxy group of 4-diphosphocytidyl-2C-methyl-D-erythritol. This is 4-diphosphocytidyl-2-C-methyl-D-erythritol kinase from Escherichia coli O7:K1 (strain IAI39 / ExPEC).